The sequence spans 281 residues: NADPH-dependent 7-cyano-7-deazaguanine reductase (281 aa).

87–89 provides a ligand contact to substrate; it reads IES. Residue 89-90 participates in NADPH binding; sequence SK. The active-site Thioimide intermediate is the C188. The active-site Proton donor is the D195. Substrate is bound at residue 227-228; it reads HE. 256–257 is a binding site for NADPH; the sequence is RG. The interval 261–281 is disordered; that stretch reads INPYRSTEQDKPAHNHRMARQ.

This sequence belongs to the GTP cyclohydrolase I family. QueF type 2 subfamily. As to quaternary structure, homodimer.

Its subcellular location is the cytoplasm. It carries out the reaction 7-aminomethyl-7-carbaguanine + 2 NADP(+) = 7-cyano-7-deazaguanine + 2 NADPH + 3 H(+). It participates in tRNA modification; tRNA-queuosine biosynthesis. In terms of biological role, catalyzes the NADPH-dependent reduction of 7-cyano-7-deazaguanine (preQ0) to 7-aminomethyl-7-deazaguanine (preQ1). This Vibrio parahaemolyticus serotype O3:K6 (strain RIMD 2210633) protein is NADPH-dependent 7-cyano-7-deazaguanine reductase.